The chain runs to 123 residues: Histone H2B.1, embryonic (123 aa).

Positions 1–32 (MAPTGQVAKKGSKKAVKPPRASGGKKRHRKRK) are disordered. Residues 10 to 32 (KGSKKAVKPPRASGGKKRHRKRK) show a composition bias toward basic residues. O-linked (GlcNAc) serine glycosylation occurs at Ser-110. Residue Lys-118 forms a Glycyl lysine isopeptide (Lys-Gly) (interchain with G-Cter in ubiquitin) linkage.

This sequence belongs to the histone H2B family. As to quaternary structure, the nucleosome is a histone octamer containing two molecules each of H2A, H2B, H3 and H4 assembled in one H3-H4 heterotetramer and two H2A-H2B heterodimers. The octamer wraps approximately 147 bp of DNA. Monoubiquitination of Lys-118 gives a specific tag for epigenetic transcriptional activation and is also prerequisite for histone H3 'Lys-4' and 'Lys-79' methylation. Post-translationally, glcNAcylation at Ser-110 promotes monoubiquitination of Lys-118. It fluctuates in response to extracellular glucose, and associates with transcribed genes.

The protein resides in the nucleus. It localises to the chromosome. Core component of nucleosome. Nucleosomes wrap and compact DNA into chromatin, limiting DNA accessibility to the cellular machineries which require DNA as a template. Histones thereby play a central role in transcription regulation, DNA repair, DNA replication and chromosomal stability. DNA accessibility is regulated via a complex set of post-translational modifications of histones, also called histone code, and nucleosome remodeling. The polypeptide is Histone H2B.1, embryonic (Psammechinus miliaris (Green sea urchin)).